The sequence spans 460 residues: tRNA hydroxylation protein P (460 aa).

It belongs to the peptidase U32 family.

Involved in prephenate-dependent formation of 5-hydroxyuridine (ho5U) modification at position 34 in tRNAs, the first step in 5-carboxymethoxyuridine (cmo5U) biosynthesis. The sequence is that of tRNA hydroxylation protein P from Haemophilus influenzae (strain ATCC 51907 / DSM 11121 / KW20 / Rd).